Here is a 144-residue protein sequence, read N- to C-terminus: Galectin b (144 aa).

Residues 1 to 138 (DHIDLEFDVG…DAVLRKLCVV (138 aa)) form the Galectin domain.

Lectin that binds beta-galactoside and a wide array of complex carbohydrates. This Aplysina lactuca (Marine sponge) protein is Galectin b.